The following is a 273-amino-acid chain: uncharacterized protein (273 aa).

An NAD(+)-binding site is contributed by 10 to 34 (VITGAATGIGQATAEVFANEGARVI). Ser-142 contacts substrate. Residue Tyr-155 is the Proton acceptor of the active site.

This sequence belongs to the short-chain dehydrogenases/reductases (SDR) family.

This is an uncharacterized protein from Bacillus subtilis (strain 168).